The sequence spans 328 residues: Alanine racemase (328 aa).

Residue Lys33 is the Proton acceptor; specific for D-alanine of the active site. Lys33 is modified (N6-(pyridoxal phosphate)lysine). Arg118 serves as a coordination point for substrate. Catalysis depends on Tyr237, which acts as the Proton acceptor; specific for L-alanine. Met283 contacts substrate.

This sequence belongs to the alanine racemase family. Requires pyridoxal 5'-phosphate as cofactor.

It carries out the reaction L-alanine = D-alanine. The protein operates within amino-acid biosynthesis; D-alanine biosynthesis; D-alanine from L-alanine: step 1/1. In terms of biological role, catalyzes the interconversion of L-alanine and D-alanine. May also act on other amino acids. In Campylobacter jejuni (strain RM1221), this protein is Alanine racemase (alr).